Reading from the N-terminus, the 349-residue chain is Diacylglycerol O-acyltransferase 2B (349 aa).

2 helical membrane-spanning segments follow: residues 44-64 (ICLI…ILIM) and 114-134 (YIMS…NFAT).

It belongs to the diacylglycerol acyltransferase family.

It localises to the endoplasmic reticulum membrane. It catalyses the reaction an acyl-CoA + a 1,2-diacyl-sn-glycerol = a triacyl-sn-glycerol + CoA. It functions in the pathway glycerolipid metabolism; triacylglycerol biosynthesis. Its function is as follows. Catalyzes the terminal and only committed step in triacylglycerol synthesis by using diacylglycerol and fatty acyl CoA as substrates. Required for storage lipid synthesis. This is Diacylglycerol O-acyltransferase 2B (DGAT2B) from Umbelopsis ramanniana (Oleaginous fungus).